The chain runs to 620 residues: Guanylate-binding protein 3 (620 aa).

The segment at 1–304 is GTPase domain (Globular); sequence MEAPICLVEN…NAINSGTVPC (304 aa). Positions 29–271 constitute a GB1/RHD3-type G domain; that stretch reads AQPLVVVAIV…FCSYIFTNGK (243 aa). Residues 39 to 46, 61 to 63, and 91 to 95 contribute to the GTP site; these read GLYRTGKS, LGS, and DTEGL. Coiled coils occupy residues 375–411 and 477–582; these read KKLV…SESL and DGER…TRRK.

The protein belongs to the TRAFAC class dynamin-like GTPase superfamily. GB1/RHD3 GTPase family. GB1 subfamily. Heterodimer with other family members, including GBP1, GBP2 and GBP5. Dimerization regulates subcellular location. As to expression, brain, lung, heart, spleen, kidney, liver and intestine.

The protein localises to the cytoplasm. It localises to the perinuclear region. Its subcellular location is the golgi apparatus membrane. The catalysed reaction is GTP + H2O = GDP + phosphate + H(+). Functionally, interferon (IFN)-inducible GTPase that plays important roles in innate immunity against a diverse range of bacterial, viral and protozoan pathogens. Hydrolyzes GTP very efficiently; GDP rather than GMP is the major reaction product. Following infection, recruited to the pathogen-containing vacuoles or vacuole-escaped bacteria and acts as a positive regulator of inflammasome assembly by promoting the release of inflammasome ligands from bacteria. Acts by promoting lysis of pathogen-containing vacuoles, releasing pathogens into the cytosol. Following pathogen release in the cytosol, promotes recruitment of proteins that mediate bacterial cytolysis, such as Gm12250/Irgb10: this liberates ligands that are detected by inflammasomes, such as lipopolysaccharide (LPS) that activates the non-canonical CASP4/CASP11 inflammasome or double-stranded DNA (dsDNA) that activates the AIM2 inflammasome. May play a role in erythroid differentiation. The sequence is that of Guanylate-binding protein 3 from Mus musculus (Mouse).